The primary structure comprises 477 residues: Methylenetetrahydrofolate--tRNA-(uracil-5-)-methyltransferase TrmFO (477 aa).

15-20 (GAGLAG) is an FAD binding site.

This sequence belongs to the MnmG family. TrmFO subfamily. FAD serves as cofactor.

The protein localises to the cytoplasm. The catalysed reaction is uridine(54) in tRNA + (6R)-5,10-methylene-5,6,7,8-tetrahydrofolate + NADH + H(+) = 5-methyluridine(54) in tRNA + (6S)-5,6,7,8-tetrahydrofolate + NAD(+). It catalyses the reaction uridine(54) in tRNA + (6R)-5,10-methylene-5,6,7,8-tetrahydrofolate + NADPH + H(+) = 5-methyluridine(54) in tRNA + (6S)-5,6,7,8-tetrahydrofolate + NADP(+). In terms of biological role, catalyzes the folate-dependent formation of 5-methyl-uridine at position 54 (M-5-U54) in all tRNAs. The chain is Methylenetetrahydrofolate--tRNA-(uracil-5-)-methyltransferase TrmFO from Nitrobacter hamburgensis (strain DSM 10229 / NCIMB 13809 / X14).